A 1365-amino-acid chain; its full sequence is Histone-lysine N-methyltransferase NSD2 (1365 aa).

Thr-110 and Thr-114 each carry phosphothreonine. Ser-121 bears the Phosphoserine mark. Residues 149–169 (ADVSQSEENEQKSDNKTRRNR) are disordered. At Ser-172 the chain carries Phosphoserine. The 65-residue stretch at 222–286 (VGDLVWSKVS…FEKSLVAFEG (65 aa)) folds into the PWWP 1 domain. 3 disordered regions span residues 373–455 (MVDS…RKGD), 513–567 (QSEE…DKTA), and 594–658 (CKPL…SKKS). A Phosphoserine modification is found at Ser-376. A Phosphothreonine modification is found at Thr-422. Residues 453 to 521 (KGDSAAQFLV…AQSEEDSGNG (69 aa)) constitute a DNA-binding region (HMG box). The span at 552-567 (DKHSLRKRETITDKTA) shows a compositional bias: basic and acidic residues. Over residues 603–623 (ASATASSALGFNKSSSPSASL) the composition is skewed to polar residues. Residues 632–648 (PGDEPSESPYESADETQ) are compositionally biased toward acidic residues. PHD-type zinc fingers lie at residues 667–713 (EYVC…CASG), 714–770 (IHSC…CHAS), and 831–875 (VSWC…CRAG). Positions 880–942 (FQDIIWVKLG…QARVFPYMEG (63 aa)) constitute a PWWP 2 domain. In terms of domain architecture, AWS spans 1011–1061 (SEIPKCNCKPTDENPCGSDSECLNRMLMFECHPQVCPAGEYCQNQCFTKRQ). Zn(2+) contacts are provided by Cys-1016, Cys-1018, Cys-1026, Cys-1032, Cys-1041, Cys-1046, and Cys-1052. Positions 1063–1180 (PETKIIKTDG…AGTELTFNYN (118 aa)) constitute an SET domain. S-adenosyl-L-methionine is bound by residues Trp-1075, 1115 to 1118 (THFY), and 1141 to 1142 (NH). Cys-1144 serves as a coordination point for Zn(2+). Residue Asn-1186 coordinates S-adenosyl-L-methionine. The region spanning 1187 to 1203 (EKTVCRCGASNCSGFLG) is the Post-SET domain. Residue Cys-1191 coordinates Zn(2+). S-adenosyl-L-methionine is bound at residue Arg-1192. Zn(2+) is bound by residues Cys-1193 and Cys-1198. Residues 1206–1232 (PKTSASLSSEEKGKKAKKKTRRRRAKG) form a disordered region. Residues 1219–1230 (KKAKKKTRRRRA) are compositionally biased toward basic residues. Residues 1239-1286 (EDECFRCGDGGQLVLCDRKFCTKAYHLSCLGLGKRPFGKWECPWHHCD) form a PHD-type 4; atypical zinc finger. Residues 1329-1365 (RADSSSSTKTEKPFPESLKSKGKRKKRRCWRRVTDGK) are disordered. The span at 1348-1359 (SKGKRKKRRCWR) shows a compositional bias: basic residues.

Belongs to the class V-like SAM-binding methyltransferase superfamily. Histone-lysine methyltransferase family. SET2 subfamily. Interacts with HDAC1. Interacts (via PHD-type zinc fingers 1, 2 and 3) with SALL1. Interacts (via PHD-type 1, 2 and 3) with SALL4. Interacts with NANOG. Interacts with OGT. Interacts (via HMG box) with NKX2-5. As to expression, during B-cell development, expressed in early B2 cell progenitors (pre- and pro-B cells) with a decrease in expression at later stages.

It localises to the nucleus. Its subcellular location is the chromosome. It catalyses the reaction L-lysyl(36)-[histone H3] + S-adenosyl-L-methionine = N(6)-methyl-L-lysyl(36)-[histone H3] + S-adenosyl-L-homocysteine + H(+). The catalysed reaction is L-lysyl(36)-[histone H3] + 2 S-adenosyl-L-methionine = N(6),N(6)-dimethyl-L-lysyl(36)-[histone H3] + 2 S-adenosyl-L-homocysteine + 2 H(+). Its function is as follows. Histone methyltransferase which specifically dimethylates nucleosomal histone H3 at 'Lys-36' (H3K36me2). Also monomethylates nucleosomal histone H3 at 'Lys-36' (H3K36me) in vitro. Does not trimethylate nucleosomal histone H3 at 'Lys-36' (H3K36me3). However, specifically trimethylates histone H3 at 'Lys-36' (H3K36me3) at euchromatic regions in embryonic stem (ES) cells. By methylating histone H3 at 'Lys-36', involved in the regulation of gene transcription during various biological processes. In ES cells, associates with developmental transcription factors such as SALL1 and represses inappropriate gene transcription mediated by histone deacetylation. During heart development, associates with transcription factor NKX2-5 to repress transcription of NKX2-5 target genes. Plays an essential role in adipogenesis, by regulating expression of genes involved in pre-adipocyte differentiation. During T-cell receptor (TCR) and CD28-mediated T-cell activation, promotes the transcription of transcription factor BCL6 which is required for follicular helper T (Tfh) cell differentiation. During B-cell development, required for the generation of the B1 lineage. During B2 cell activation, may contribute to the control of isotype class switch recombination (CRS), splenic germinal center formation, and the humoral immune response. Plays a role in class switch recombination of the immunoglobulin heavy chain (IgH) locus during B-cell activation. By regulating the methylation of histone H3 at 'Lys-36' and histone H4 at 'Lys-20' at the IgH locus, involved in TP53BP1 recruitment to the IgH switch region and promotes the transcription of IgA. Functionally, histone methyltransferase which specifically dimethylates nucleosomal histone H3 at 'Lys-36' (H3K36me2). Mono-, di- and tri-methylates histone H3 at 'Lys-27' (H3K27me, H3K27me2, H3K27me3). Methylation of histone H3 at 'Lys-27' is controversial. May act as a transcription regulator that binds DNA and suppresses IL5 transcription through HDAC recruitment. The sequence is that of Histone-lysine N-methyltransferase NSD2 (Nsd2) from Mus musculus (Mouse).